Here is a 1248-residue protein sequence, read N- to C-terminus: MAEKAKKKKNGGGGNQRIAFYKLFTFADRYDIVLMVIGTLSAMANGLTQPFMSILMGQLINVFGFSDHDHVFKEVSKVAVKFLYLAAYAGVVSFLQVSCWMVTGERQSTRIRRLYLKTILRQDIGFFDTETNTGEVIGRMSGDTILIQDSMGEKVGKFTQLVSSFVGGFTVAFIVGMKLTLALLPCVPLIVGTGGAMTYIMSKKAQRVQLAYTEAGNVVQQAVGSIRTVVAFTGEKQSMGKYEKKLEIAYKSMVKQGLYSGLGIGIMMVVVYCTYGFAIWYGARQIIEKGYTGGQVMNVITSILTGGMALGQTLPSLNSFAAGTAAAYKMFETIKRKPKIDAYDMSGEVLEEIKGDIELRDVYFRYPARPDVQIFVGFSLTVPNGMTVALVGQSGSGKSTVISLIERFYDPESGEVLIDGIDLKKFQVKWIRSKIGLVSQEPILFATTIRENIVYGKKDASDQEIRTALKLANASNFIDKLPQGLETMVGEHGTQLSGGQKQRIAIARAILKNPKILLLDEATSALDAESERIVQDALVKLMLSRTTVVVAHRLTTIRTADMIAVVQQGKVIEKGTHDEMIKDPEGTYSQLVRLQEGSKKEEAIDKEPEKCEMSLEIESSDSQNGIHSGTLTSPSGLPGVISLDQTEEFHENISSTKTQTVKKGKEVSLRRLAHLNKPEISVLLLGSLAAVIHGIVFPVQGLLLSRTIRIFFEPSNKLKNDSLFWALIFVALGLTDLIVIPLQNYLFAIAGAKLIKRIRSLSFDRVLHQDISWFDDTKNSSGVIGARLSTDASTVKSIVGDVLGLIMQNMATIIGAFIIAFTANWLLALMALLVAPVMFFQGYYQIKFITGFGAKARGKYEEASQVASDAVSSIRTVASFCAEDKVMDLYQEKCDEPKQQGFKLGLVSGLCYGGSYLALYVIESVCFLGGSWLIQNRRATFGEFFQVFFALTLTAVGVTQTSTMAPDINKAKDSAASIFDILDSKPKIDSSSEKGTILPIVHGDIELQHVSFRYPMRPDIQIFSDLCLTISSGQTVALVGESGSGKSTVISLLERFYDPDSGKILLDQVEIQSLKLSWLREQMGLVSQEPVLFNETIGSNIAYGKIGGATEEEIITAAKAANVHNFISSLPQGYETSVGERGVQLSGGQKQRIAIARAILKDPKILLLDEATSALDAESERVVQDALDQVMVNRTTVVVAHLLTTIKDADMIAVVKNGVIAESGRHETLMEISGGAYASLVAFNMSAN.

6 consecutive transmembrane segments (helical) span residues 32-52 (IVLMVIGTLSAMANGLTQPFM), 82-102 (FLYLAAYAGVVSFLQVSCWMV), 158-175 (FTQLVSSFVGGFTVAFIV), 179-201 (LTLALLPCVPLIVGTGGAMTYIM), 261-281 (GLGIGIMMVVVYCTYGFAIWY), and 299-321 (VITSILTGGMALGQTLPSLNSFA). One can recognise an ABC transmembrane type-1 1 domain in the interval 35 to 322 (MVIGTLSAMA…TLPSLNSFAA (288 aa)). Residues 357–593 (IELRDVYFRY…PEGTYSQLVR (237 aa)) form the ABC transporter 1 domain. An ATP-binding site is contributed by 392–399 (GQSGSGKS). N-linked (GlcNAc...) asparagine glycans are attached at residues Asn-473 and Asn-652. Residues 682–702 (VLLLGSLAAVIHGIVFPVQGL) traverse the membrane as a helical segment. The 288-residue stretch at 683–970 (LLLGSLAAVI…TSTMAPDINK (288 aa)) folds into the ABC transmembrane type-1 2 domain. N-linked (GlcNAc...) asparagine glycosylation is present at Asn-720. A helical transmembrane segment spans residues 722–742 (SLFWALIFVALGLTDLIVIPL). N-linked (GlcNAc...) asparagine glycosylation is present at Asn-779. The next 4 helical transmembrane spans lie at 813 to 833 (IIGAFIIAFTANWLLALMALL), 834 to 854 (VAPVMFFQGYYQIKFITGFGA), 914 to 934 (GSYLALYVIESVCFLGGSWLI), and 939 to 959 (ATFGEFFQVFFALTLTAVGVT). Positions 1005-1242 (IELQHVSFRY…SGGAYASLVA (238 aa)) constitute an ABC transporter 2 domain. Residue 1040-1047 (GESGSGKS) coordinates ATP. Asn-1094, Asn-1193, and Asn-1244 each carry an N-linked (GlcNAc...) asparagine glycan.

It belongs to the ABC transporter superfamily. ABCB family. Multidrug resistance exporter (TC 3.A.1.201) subfamily.

The protein localises to the membrane. In Arabidopsis thaliana (Mouse-ear cress), this protein is ABC transporter B family member 7 (ABCB7).